The following is a 4001-amino-acid chain: Ankyrin repeat and KH domain-containing protein mask (4001 aa).

Residues 1–14 (MNNDAKNHESDDLN) are compositionally biased toward basic and acidic residues. Disordered regions lie at residues 1–61 (MNND…NRQL), 91–174 (KNEP…GGGS), and 391–494 (DTDT…FLLD). Residues 15 to 30 (VRSTAYFNQQTTTNQP) show a composition bias toward polar residues. The span at 38-61 (NNTGSGSGSNNNNNNTNQNPNRQL) shows a compositional bias: low complexity. The span at 94–117 (PLTTTESSGVLTNTPLPSNSRLKV) shows a compositional bias: polar residues. The span at 118–159 (NNNNNTNNTAKMSGTSSSQSSATPTPPTASSSTTTTTTTNIS) shows a compositional bias: low complexity. Residues 160-174 (TGGGGSGSSGGGGGS) show a composition bias toward gly residues. Composition is skewed to acidic residues over residues 408–425 (SESE…ESDP) and 434–486 (VRED…EDAP). Serine 501 carries the phosphoserine modification. ANK repeat units lie at residues 546–575 (SGFS…NVNL), 584–614 (DGES…QVED), 618–647 (KDST…DVNA), 651–680 (TGNT…NVEE), 684–713 (NGHT…GINT), 718–747 (FKES…DQEH), 751–780 (EMHT…QVNM), 784–813 (SFES…NIEE), 817–846 (EGYT…NINA), 851–880 (TQET…NLEL), 881–910 (GAST…NVHA), 914–943 (TGDT…ELEH), 947–976 (GGRT…NVNK), 981–1011 (NDHT…PFHK), and 1014–1043 (DNST…ISPT). Disordered regions lie at residues 1046-1067 (AASA…NQMR) and 1306-1376 (QPGE…PTAL). Residues 1367 to 1376 (DNNQPVPTAL) are compositionally biased toward polar residues. Residues serine 1389 and serine 1588 each carry the phosphoserine modification. Disordered regions lie at residues 1583–1612 (GDQP…RLGS), 1646–1669 (SDLE…ENTL), 1682–1779 (EDGI…SLPL), 1852–1872 (VVHQ…DGSA), 2084–2108 (MAQH…QQLH), and 2225–2256 (TPAP…KERR). Composition is skewed to acidic residues over residues 1646-1657 (SDLESECEDDAE), 1685-1704 (IIVE…EEQD), and 1716-1759 (DDED…EPDS). The span at 1760-1776 (DQGTGNNNNNSKSGASS) shows a compositional bias: low complexity. Over residues 2084–2093 (MAQHQAQQQQ) the composition is skewed to low complexity. Residues 2228-2237 (PSSGVSSTKS) are compositionally biased toward polar residues. ANK repeat units lie at residues 2312–2341 (NHDT…NIEH), 2345–2374 (KGFT…ELEA), 2379–2408 (TKDT…NKEH), 2412–2441 (SDYT…EINS), 2447–2476 (LGIS…DINA), 2481–2510 (NRNT…NVEH), 2514–2543 (TGLT…DVNA), 2549–2578 (SRDT…SVEV), 2582–2611 (KGNS…DIDS), and 2615–2644 (RRVS…QFPS). Positions 2674 to 2732 (AKEAQAVKANKNASILLEELDLERTREESRKAAAARRRERKKKKKMEKKEEKRRQQQGN) form a coiled coil. Serine 2687 is modified (phosphoserine). Residue threonine 2698 is modified to Phosphothreonine. Residues 2699-3033 (REESRKAAAA…TSTTTAASSV (335 aa)) are disordered. A compositionally biased stretch (basic residues) spans 2706 to 2719 (AAARRRERKKKKKM). The span at 2739 to 2762 (MQGDDDDASDKDDDSDKDDEDEEA) shows a compositional bias: acidic residues. 2 positions are modified to phosphoserine: serine 2747 and serine 2753. Residues 2793–2810 (SQSAQAAEAAANSVSTNS) show a composition bias toward low complexity. Over residues 2828 to 2839 (EPTQPVITSNSV) the composition is skewed to polar residues. Positions 2868 to 2886 (RQLDVKKEEPALKKKEEKN) are enriched in basic and acidic residues. The segment covering 2906-2941 (ALPAKQQPSSSSKLQSSESASNINSSTATNTSSANT) has biased composition (low complexity). The segment covering 2950–2960 (ASQTASATTLN) has biased composition (polar residues). Residues 2963–2975 (KRTEVDGWKEVVR) are compositionally biased toward basic and acidic residues. Residues 2995 to 3004 (TATSSATSVQ) are compositionally biased toward polar residues. Over residues 3012–3032 (ANSSSNSSSSLTTSTTTAASS) the composition is skewed to low complexity. A KH domain is found at 3036 to 3100 (MTCKKVQVPV…DATKQAHMLI (65 aa)). Composition is skewed to low complexity over residues 3156 to 3178 (ASTT…ASYS), 3195 to 3227 (SGRS…AGSS), and 3244 to 3257 (NGVI…SSKS). Disordered regions lie at residues 3156–3329 (ASTT…GQGG), 3383–3457 (KPIA…QTSQ), 3520–3636 (AVGD…PPTA), and 3744–3786 (IFPQ…GGAA). Polar residues predominate over residues 3262 to 3278 (QKSSTTLGKSSTVSPGA). Positions 3396–3416 (GSPTQVQQQHQTQQQQQQQLP) are enriched in low complexity. Positions 3417-3427 (QPAPVPGPQPQ) are enriched in pro residues. Residues 3428-3457 (QQPLQQQQQQQAPQQQPQQPNQQQQPQTSQ) show a composition bias toward low complexity. Residues 3539–3559 (NILSSPVGSSKASSNHSTSPP) are compositionally biased toward polar residues. Residues 3565–3577 (QQQQQQQPQSSQQ) show a composition bias toward low complexity. Residue serine 3596 is modified to Phosphoserine. Residues 3774-3786 (PPGTGARQPGGAA) show a composition bias toward low complexity. 3 positions are modified to phosphoserine: serine 3820, serine 3822, and serine 3825. Residues 3876-3945 (KAQPPGLQQP…HNMQAPPNMS (70 aa)) are disordered. Over residues 3891-3910 (SQQQQQQPLNWLKQQPQQQQ) the composition is skewed to low complexity.

May interact with Unc-89 (via protein kinase domain 1 or 2). Expressed ubiquitously in eye imaginal disk, slightly higher expression is seen in presumptive photoreceptors. Expressed in indirect flight muscle (IFM) (at protein level).

It localises to the cytoplasm. Its subcellular location is the myofibril. The protein resides in the sarcomere. It is found in the z line. The protein localises to the m line. In terms of biological role, mediator of receptor tyrosine kinase (RTK) signaling, and may act either downstream of MAPK or transduce signaling through a parallel branch of the RTK pathway. Required for the development and organization of indirect flight muscle sarcomeres by regulating the formation of M line and H zone and the correct assembly of thick and thin filaments in the sarcomere. The polypeptide is Ankyrin repeat and KH domain-containing protein mask (Drosophila melanogaster (Fruit fly)).